Consider the following 839-residue polypeptide: Probable beta-glucosidase I (839 aa).

An N-linked (GlcNAc...) asparagine glycan is attached at Asn197. Asp225 is an active-site residue. The PA14 domain maps to 395 to 555 (DGKKGFSFRV…SQEELIAKAA (161 aa)).

Belongs to the glycosyl hydrolase 3 family.

The protein localises to the secreted. The catalysed reaction is Hydrolysis of terminal, non-reducing beta-D-glucosyl residues with release of beta-D-glucose.. Its pathway is glycan metabolism; cellulose degradation. In terms of biological role, beta-glucosidases are one of a number of cellulolytic enzymes involved in the degradation of cellulosic biomass. Catalyzes the last step releasing glucose from the inhibitory cellobiose. The polypeptide is Probable beta-glucosidase I (bglI) (Aspergillus terreus (strain NIH 2624 / FGSC A1156)).